A 215-amino-acid chain; its full sequence is Oligoribonuclease (215 aa).

Residues 5-170 (LVWIDCEMTG…ADIHESIREL (166 aa)) enclose the Exonuclease domain. Residue Tyr127 is part of the active site. Residues 196–215 (LDEGKDAPGPSDSASAPPTG) are disordered. A compositionally biased stretch (low complexity) spans 202-215 (APGPSDSASAPPTG).

Belongs to the oligoribonuclease family.

The protein localises to the cytoplasm. Functionally, 3'-to-5' exoribonuclease specific for small oligoribonucleotides. In Mycolicibacterium paratuberculosis (strain ATCC BAA-968 / K-10) (Mycobacterium paratuberculosis), this protein is Oligoribonuclease.